The following is a 427-amino-acid chain: G2/mitotic-specific cyclin-B1 (427 aa).

The interval Ala-33–Thr-126 is disordered. An N6-acetyllysine modification is found at Lys-73. Basic and acidic residues predominate over residues Glu-100 to Ser-110. Position 120 is a phosphoserine; by CDK1 (Ser-120). At Ser-122 the chain carries Phosphoserine. Ser-127 is modified (phosphoserine; by PLK1). The residue at position 141 (Ser-141) is a Phosphoserine. Interaction with CDK2 regions lie at residues Glu-163–Tyr-171 and Tyr-252–Met-255. Thr-315 bears the Phosphothreonine mark.

It belongs to the cyclin family. Cyclin AB subfamily. Interacts with the CDC2 protein kinase to form a serine/threonine kinase holoenzyme complex also known as maturation promoting factor (MPF). The cyclin subunit imparts substrate specificity to the complex. Binds HEI10. Interacts with catalytically active RALBP1 and CDC2 during mitosis to form an endocytotic complex during interphase. Interacts with CCNF; interaction is required for nuclear localization. Interacts with CDK5RAP3. Interacts with RFPL4A and UBE2A. Interacts with INCA1. Post-translationally, ubiquitinated by the SCF(NIPA) complex during interphase, leading to its destruction. Deubiquitinated by USP22 during G2/M phase. Phosphorylated by PLK1 at Ser-127 on centrosomes during prophase: phosphorylation by PLK1 does not cause nuclear import. Phosphorylation at Ser-141 was also reported to be mediated by PLK1 but Ser-127 seems to be the primary phosphorylation site.

The protein localises to the cytoplasm. The protein resides in the nucleus. It localises to the cytoskeleton. It is found in the microtubule organizing center. Its subcellular location is the centrosome. Its function is as follows. Essential for the control of the cell cycle at the G2/M (mitosis) transition. The polypeptide is G2/mitotic-specific cyclin-B1 (CCNB1) (Bos taurus (Bovine)).